Reading from the N-terminus, the 243-residue chain is MILFPAIDLKDGQCVRLKLGDMDQATVYNEDPAAQAKAFEDQGFEWLHVVDLNGAFAGESVNGKAVEAILKATKNPVQLGGGIRTLQHIENWLSKGLRRVILGTVAVRDPALVIEACKAFPGQVAVGIDAKGGYVAVEGWAEASELGVIELAKKFEGAGVAAIIYTDIDRDGVLAGINWDSTLGLADSVSIPVIASGGLASMDDIKRLAAPDARKLEGAISGRALYDGRIDPAEALSLLRAAA.

The active-site Proton acceptor is the aspartate 8. Aspartate 129 functions as the Proton donor in the catalytic mechanism.

Belongs to the HisA/HisF family.

It is found in the cytoplasm. The catalysed reaction is 1-(5-phospho-beta-D-ribosyl)-5-[(5-phospho-beta-D-ribosylamino)methylideneamino]imidazole-4-carboxamide = 5-[(5-phospho-1-deoxy-D-ribulos-1-ylimino)methylamino]-1-(5-phospho-beta-D-ribosyl)imidazole-4-carboxamide. It functions in the pathway amino-acid biosynthesis; L-histidine biosynthesis; L-histidine from 5-phospho-alpha-D-ribose 1-diphosphate: step 4/9. In Brucella anthropi (strain ATCC 49188 / DSM 6882 / CCUG 24695 / JCM 21032 / LMG 3331 / NBRC 15819 / NCTC 12168 / Alc 37) (Ochrobactrum anthropi), this protein is 1-(5-phosphoribosyl)-5-[(5-phosphoribosylamino)methylideneamino] imidazole-4-carboxamide isomerase.